The chain runs to 520 residues: MRFSNAFVLVAACISSVLADTKTFNFDLVNTRLAPDGFERDTVVINGEFPGTLVQVNKGDSVRIPVNNKLTSSTMRRSVSIHWHGFFQARTSGQDGPAFVNQCPQPPNTTFTYEFSVADESGTFWYHSHLSTQYCDGLRGAFVVYDPEDPLGHLYDVDDETTVITLAEWYHVLAPDINNEFFSSGIIPVQDSGLINGKGRFNGGPETPFAVVNVEQGKRYRFRVIAISCRPFFTFSVDNHNLTFMEADSVEHDPVEIQNVDIYAAQRVSVILNANQPVDNYWMRAPMTGGNPDRNPNLNISLTLAILRYKGAPEVEPTTVNVPGHKLLDQEMHPIAQEGPGKLGDGPPDKHITLNIAQPNAPFFDINGISYISPTVPVLLQILSGAKRPEDVLPSEQIFFVPKNSLIEVNIPGEGAHPFHLHGHNFDVVLASNDDTFNFVNPPRRDVYPINGGNTTFRFFTDNPGAWFLHCHIDWHLEAGLAIVFAEAPEDNVSGPQSQITPQDWLDLCPEYNAIEPEFQ.

Positions 1–19 (MRFSNAFVLVAACISSVLA) are cleaved as a signal peptide. Plastocyanin-like domains lie at 21 to 145 (TKTF…FVVY), 157 to 305 (VDDE…LTLA), and 375 to 488 (TVPV…FAEA). The Cu cation site is built by His-82 and His-84. 2 cysteine pairs are disulfide-bonded: Cys-103–Cys-509 and Cys-135–Cys-229. Asn-108 carries N-linked (GlcNAc...) asparagine glycosylation. Positions 127 and 129 each coordinate Cu cation. 2 N-linked (GlcNAc...) asparagine glycosylation sites follow: Asn-241 and Asn-299. Residues His-417, His-420, His-422, His-470, Cys-471, His-472, and His-476 each contribute to the Cu cation site. The N-linked (GlcNAc...) asparagine glycan is linked to Asn-492.

It belongs to the multicopper oxidase family. Cu cation serves as cofactor.

Its subcellular location is the secreted. It carries out the reaction 4 hydroquinone + O2 = 4 benzosemiquinone + 2 H2O. Functionally, lignin degradation and detoxification of lignin-derived products. The polypeptide is Laccase-2 (lcc2) (Agaricus bisporus (White button mushroom)).